A 331-amino-acid chain; its full sequence is Syntaxin-43 (331 aa).

The Cytoplasmic segment spans residues 1–305 (MATRNRTLLF…KAERTQRQGG (305 aa)). Disordered regions lie at residues 20–45 (VRAPMGSSSSSTLTEHNSLTGAKSGL) and 59–80 (PNRSYAPVSTEDPGNSSRGTIT). Positions 31–40 (TLTEHNSLTG) are enriched in polar residues. Residues 124–154 (KEDQHQIETLTQEVTFLLKKSEKQLQRLSAA) are a coiled coil. One can recognise a t-SNARE coiled-coil homology domain in the interval 235–297 (EEISIEREKE…DDGLKQLQKA (63 aa)). Residues 306–326 (MVMCASVLVILCFIMLVLLIL) form a helical; Anchor for type IV membrane protein membrane-spanning segment. The Vesicular portion of the chain corresponds to 327 to 331 (KEILL).

This sequence belongs to the syntaxin family. In terms of assembly, part of the t-SNARE complex. As to expression, expressed at low levels in roots, stems, flowers and leaves.

Its subcellular location is the golgi apparatus. It is found in the trans-Golgi network membrane. In terms of biological role, contributes to the regulation of secretory and vacuolar transport pathways in the post-Golgi network, and to the maintenance of the Golgi apparatus and trans-Golgi network (TGN) morphologies. Vesicle trafficking protein that functions in the secretory pathway and mediates liposome fusion. Required for extracellular resistance responses to a fungal pathogen. Also involved in the protection of chloroplasts from salicylic acid-dependent biotic stress. The polypeptide is Syntaxin-43 (Arabidopsis thaliana (Mouse-ear cress)).